The primary structure comprises 364 residues: Trans-enoyl reductase ccsC (364 aa).

52–55 is a binding site for NADP(+); it reads CDYK. 141 to 148 contacts substrate; it reads TGLATLGM. NADP(+)-binding positions include 176 to 179, 199 to 202, tyrosine 217, and 264 to 265; these read SSSV, SPRN, and LE. 284 to 288 lines the substrate pocket; sequence GPALL. NADP(+) is bound at residue 353–354; that stretch reads VS.

Belongs to the zinc-containing alcohol dehydrogenase family. In terms of assembly, monomer.

The protein operates within mycotoxin biosynthesis. In terms of biological role, trans-enoyl reductase; part of the gene cluster that mediates the biosynthesis of a family of the mycotoxins cytochalasins E and K. The hybrid PKS-NRPS synthetase ccsA and the enoyl reductase ccsC are responsible for fusion of phenylalanine with an octaketide backbone and subsequent release of the stable tetramic acid precursor. The polyketide synthase module (PKS) of the PKS-NRPS ccsA is responsible for the synthesis of the octaketide backbone. The downstream nonribosomal peptide synthetase (NRPS) amidates the carboxyl end of the octaketide with a phenylalanine. A reductase-like domain (R) at the C-terminus catalyzes the reductive release of the polyketide-amino acid intermediate. Because ccsA lacks a designated enoylreductase (ER) domain, the required activity is provided the enoyl reductase ccsC. Upon formation of the 11-membered carbocycle-fused perhydroisoindolone intermediate, a number of oxidative steps are required to afford the final cytochalasin E and K, including two hydroxylations at C17 and C18, one alcohol oxidation at C17, one epoxidation at C6 and C7 and two Baeyer-Villiger oxidations. The oxidative modification at C17, C18 and the C6-C7 epoxidation are likely to be catalyzed by the two cytochrome P450 oxygenases ccsD and ccsG. CcsD may be responsible for the epoxidation of the C6-C7 double bond. CcsG may be responsible for the successive oxidative modifications at C17 and C18. The double Baeyer-Villiger oxidations of ketocytochalasin to precytochalasin and cytochalasin Z(16) are among the final steps leading to cytochalasin E and K and are catalyzed by ccsB. The first oxygen insertion step follows that of the classic BVMO mechanism, generating the ester precytochalasin. Release of precytochalasin into an aqueous environment can generate the shunt product iso-precytochalasin through spontaneous isomerization. Alternatively, precytochalasin can undergo further oxidation by ccsB to yield the in-line carbonate-containing cytochalasin Z(16). Cytochalasin Z(16) is a precursor to cytochalasin E and cytochalasin K, whereas iso-precytochalasin is a precursor to cytochalasin Z(17) and rosellichalasin. The hydrolyase ccsE may catalyze hydrolysis of epoxide bond in cytochalasin E to afford cytochalasin K. The function of ccsF has not been assigned but it may play a role in post-PKS-NRPS biosynthetic step, resistance or transport of cytochalasins and related PKS-NRPS products. The protein is Trans-enoyl reductase ccsC of Aspergillus clavatus (strain ATCC 1007 / CBS 513.65 / DSM 816 / NCTC 3887 / NRRL 1 / QM 1276 / 107).